The sequence spans 143 residues: Large-conductance mechanosensitive channel (143 aa).

2 helical membrane passes run 16–36 (VIDL…VTAL) and 84–104 (INTV…VKLI).

It belongs to the MscL family. Homopentamer.

Its subcellular location is the cell inner membrane. Channel that opens in response to stretch forces in the membrane lipid bilayer. May participate in the regulation of osmotic pressure changes within the cell. The protein is Large-conductance mechanosensitive channel of Xanthomonas campestris pv. campestris (strain 8004).